The sequence spans 361 residues: Peptide chain release factor 1 (361 aa).

Position 238 is an N5-methylglutamine (Gln-238).

It belongs to the prokaryotic/mitochondrial release factor family. In terms of processing, methylated by PrmC. Methylation increases the termination efficiency of RF1.

It is found in the cytoplasm. In terms of biological role, peptide chain release factor 1 directs the termination of translation in response to the peptide chain termination codons UAG and UAA. The polypeptide is Peptide chain release factor 1 (Mesomycoplasma hyopneumoniae (strain J / ATCC 25934 / NCTC 10110) (Mycoplasma hyopneumoniae)).